We begin with the raw amino-acid sequence, 363 residues long: uncharacterized protein (363 aa).

The interval 35-262 is disordered; the sequence is TVPGPPGAES…GLSPCCGDGG (228 aa). The span at 56–75 shows a compositional bias: polar residues; it reads AVSSSRNPNSAGRTPNSYLT. Residues 100–116 show a composition bias toward low complexity; it reads GADPALGSLPAAGLSGL.

This is an uncharacterized protein from Homo sapiens (Human).